The chain runs to 119 residues: Holo-[acyl-carrier-protein] synthase (119 aa).

The Mg(2+) site is built by Asp-5 and Glu-51.

Belongs to the P-Pant transferase superfamily. AcpS family. Mg(2+) serves as cofactor.

It localises to the cytoplasm. It carries out the reaction apo-[ACP] + CoA = holo-[ACP] + adenosine 3',5'-bisphosphate + H(+). Functionally, transfers the 4'-phosphopantetheine moiety from coenzyme A to a Ser of acyl-carrier-protein. The polypeptide is Holo-[acyl-carrier-protein] synthase (Helicobacter pylori (strain J99 / ATCC 700824) (Campylobacter pylori J99)).